The sequence spans 63 residues: Megourin-3 (63 aa).

As to quaternary structure, monomer. In terms of processing, contains four disulfide bonds.

The protein localises to the secreted. Has antimicrobial activity against Gram-positive bacteria and fungi. The chain is Megourin-3 from Megoura viciae (Vetch aphid).